A 131-amino-acid polypeptide reads, in one-letter code: Small ribosomal subunit protein uS8 (131 aa).

This sequence belongs to the universal ribosomal protein uS8 family. Part of the 30S ribosomal subunit. Contacts proteins S5 and S12.

In terms of biological role, one of the primary rRNA binding proteins, it binds directly to 16S rRNA central domain where it helps coordinate assembly of the platform of the 30S subunit. The sequence is that of Small ribosomal subunit protein uS8 from Malacoplasma penetrans (strain HF-2) (Mycoplasma penetrans).